Here is an 871-residue protein sequence, read N- to C-terminus: Coatomer subunit gamma-2 (871 aa).

The segment covering 1 to 11 (MIKKFDKKDEE) has biased composition (basic and acidic residues). The disordered stretch occupies residues 1–20 (MIKKFDKKDEESGSGSNPFR). 6 HEAT repeats span residues 64–101 (TEAT…ISED), 283–320 (RELA…KHPS), 321–355 (AVTA…GSES), 356–392 (SVDR…KYPR), 395–430 (SVMM…ENPE), and 467–504 (PVPS…QNEN). The residue at position 594 (Thr-594) is a Phosphothreonine.

It belongs to the COPG family. As to quaternary structure, oligomeric complex. Binds to CDC42. Interacts with JAGN1. Interacts with TMED10 (via cytoplasmic domain).

The protein resides in the cytoplasm. It is found in the cytosol. Its subcellular location is the golgi apparatus membrane. It localises to the cytoplasmic vesicle. The protein localises to the COPI-coated vesicle membrane. Functionally, the coatomer is a cytosolic protein complex that binds to dilysine motifs and reversibly associates with Golgi non-clathrin-coated vesicles, which further mediate biosynthetic protein transport from the ER, via the Golgi up to the trans Golgi network. Coatomer complex is required for budding from Golgi membranes, and is essential for the retrograde Golgi-to-ER transport of dilysine-tagged proteins. In mammals, the coatomer can only be recruited by membranes associated to ADP-ribosylation factors (ARFs), which are small GTP-binding proteins; the complex also influences the Golgi structural integrity, as well as the processing, activity, and endocytic recycling of LDL receptors. The sequence is that of Coatomer subunit gamma-2 (COPG2) from Bos taurus (Bovine).